A 488-amino-acid polypeptide reads, in one-letter code: Protein nucleotidyltransferase YdiU (488 aa).

Residues Gly91, Gly93, Arg94, Lys114, Asp126, Gly127, Arg177, and Arg184 each contribute to the ATP site. Asp253 (proton acceptor) is an active-site residue. Residues Asn254 and Asp263 each contribute to the Mg(2+) site. Residue Asp263 participates in ATP binding.

This sequence belongs to the SELO family. Mg(2+) is required as a cofactor. It depends on Mn(2+) as a cofactor.

It carries out the reaction L-seryl-[protein] + ATP = 3-O-(5'-adenylyl)-L-seryl-[protein] + diphosphate. The enzyme catalyses L-threonyl-[protein] + ATP = 3-O-(5'-adenylyl)-L-threonyl-[protein] + diphosphate. The catalysed reaction is L-tyrosyl-[protein] + ATP = O-(5'-adenylyl)-L-tyrosyl-[protein] + diphosphate. It catalyses the reaction L-histidyl-[protein] + UTP = N(tele)-(5'-uridylyl)-L-histidyl-[protein] + diphosphate. It carries out the reaction L-seryl-[protein] + UTP = O-(5'-uridylyl)-L-seryl-[protein] + diphosphate. The enzyme catalyses L-tyrosyl-[protein] + UTP = O-(5'-uridylyl)-L-tyrosyl-[protein] + diphosphate. In terms of biological role, nucleotidyltransferase involved in the post-translational modification of proteins. It can catalyze the addition of adenosine monophosphate (AMP) or uridine monophosphate (UMP) to a protein, resulting in modifications known as AMPylation and UMPylation. This chain is Protein nucleotidyltransferase YdiU, found in Bacillus cereus (strain AH187).